The chain runs to 98 residues: DNA-binding protein Fis (98 aa).

The segment at residues 74–93 (QTRAALMMGINRGTLRKKLK) is a DNA-binding region (H-T-H motif).

Belongs to the transcriptional regulatory Fis family. In terms of assembly, homodimer.

Its function is as follows. Activates ribosomal RNA transcription. Plays a direct role in upstream activation of rRNA promoters. The sequence is that of DNA-binding protein Fis from Citrobacter koseri (strain ATCC BAA-895 / CDC 4225-83 / SGSC4696).